We begin with the raw amino-acid sequence, 441 residues long: Xylose isomerase (441 aa).

Residues His-99 and Asp-102 contribute to the active site. Mg(2+) contacts are provided by Glu-230, Glu-266, His-269, Asp-294, Asp-305, Asp-307, and Asp-337.

Belongs to the xylose isomerase family. In terms of assembly, homotetramer. The cofactor is Mg(2+).

It localises to the cytoplasm. It catalyses the reaction alpha-D-xylose = alpha-D-xylulofuranose. In terms of biological role, exhibits xylose isomerase activity. This chain is Xylose isomerase (xylA), found in Bacillus sp. (strain LW2).